Consider the following 460-residue polypeptide: Tol-Pal system protein TolB (460 aa).

Residues 1-22 form the signal peptide; it reads MTIFQKSFILLIIWNFSLFAFS.

Belongs to the TolB family. The Tol-Pal system is composed of five core proteins: the inner membrane proteins TolA, TolQ and TolR, the periplasmic protein TolB and the outer membrane protein Pal. They form a network linking the inner and outer membranes and the peptidoglycan layer.

Its subcellular location is the periplasm. Its function is as follows. Part of the Tol-Pal system, which plays a role in outer membrane invagination during cell division and is important for maintaining outer membrane integrity. TolB occupies a key intermediary position in the Tol-Pal system because it communicates directly with both membrane-embedded components, Pal in the outer membrane and TolA in the inner membrane. This is Tol-Pal system protein TolB from Blochmanniella floridana.